Consider the following 465-residue polypeptide: A-type ATP synthase subunit B (465 aa).

This sequence belongs to the ATPase alpha/beta chains family. In terms of assembly, has multiple subunits with at least A(3), B(3), C, D, E, F, H, I and proteolipid K(x).

It localises to the cell membrane. Functionally, component of the A-type ATP synthase that produces ATP from ADP in the presence of a proton gradient across the membrane. The B chain is a regulatory subunit. In Pyrococcus horikoshii (strain ATCC 700860 / DSM 12428 / JCM 9974 / NBRC 100139 / OT-3), this protein is A-type ATP synthase subunit B.